The following is a 251-amino-acid chain: Triosephosphate isomerase (251 aa).

Asparagine 9–lysine 11 serves as a coordination point for substrate. Histidine 94 acts as the Electrophile in catalysis. Glutamate 166 acts as the Proton acceptor in catalysis. Substrate contacts are provided by residues glycine 172, serine 211, and glycine 232–glycine 233.

Belongs to the triosephosphate isomerase family. In terms of assembly, homodimer.

The protein resides in the cytoplasm. It carries out the reaction D-glyceraldehyde 3-phosphate = dihydroxyacetone phosphate. It functions in the pathway carbohydrate biosynthesis; gluconeogenesis. The protein operates within carbohydrate degradation; glycolysis; D-glyceraldehyde 3-phosphate from glycerone phosphate: step 1/1. Involved in the gluconeogenesis. Catalyzes stereospecifically the conversion of dihydroxyacetone phosphate (DHAP) to D-glyceraldehyde-3-phosphate (G3P). In Xanthomonas axonopodis pv. citri (strain 306), this protein is Triosephosphate isomerase.